We begin with the raw amino-acid sequence, 560 residues long: DNA ligase B (560 aa).

Catalysis depends on lysine 124, which acts as the N6-AMP-lysine intermediate.

Belongs to the NAD-dependent DNA ligase family. LigB subfamily.

The catalysed reaction is NAD(+) + (deoxyribonucleotide)n-3'-hydroxyl + 5'-phospho-(deoxyribonucleotide)m = (deoxyribonucleotide)n+m + AMP + beta-nicotinamide D-nucleotide.. Catalyzes the formation of phosphodiester linkages between 5'-phosphoryl and 3'-hydroxyl groups in double-stranded DNA using NAD as a coenzyme and as the energy source for the reaction. The polypeptide is DNA ligase B (Escherichia coli O6:H1 (strain CFT073 / ATCC 700928 / UPEC)).